We begin with the raw amino-acid sequence, 258 residues long: UPF0246 protein YaaA (258 aa).

The protein belongs to the UPF0246 family.

The sequence is that of UPF0246 protein YaaA from Escherichia coli (strain SE11).